The primary structure comprises 268 residues: Hydroxyethylthiazole kinase (268 aa).

Residue methionine 45 coordinates substrate. Positions 121 and 167 each coordinate ATP. Glycine 194 contributes to the substrate binding site.

Belongs to the Thz kinase family. It depends on Mg(2+) as a cofactor.

The enzyme catalyses 5-(2-hydroxyethyl)-4-methylthiazole + ATP = 4-methyl-5-(2-phosphooxyethyl)-thiazole + ADP + H(+). It participates in cofactor biosynthesis; thiamine diphosphate biosynthesis; 4-methyl-5-(2-phosphoethyl)-thiazole from 5-(2-hydroxyethyl)-4-methylthiazole: step 1/1. Functionally, catalyzes the phosphorylation of the hydroxyl group of 4-methyl-5-beta-hydroxyethylthiazole (THZ). The chain is Hydroxyethylthiazole kinase from Bacillus cereus (strain ATCC 10987 / NRS 248).